The chain runs to 189 residues: Adenylate kinase (189 aa).

ATP is bound at residue 12-17 (GSGKTT). Residues 33–62 (STGDLLRAEVASGSELGKLIDGFISKGNLV) form an NMP region. AMP is bound by residues Thr34, Arg39, 60–62 (NLV), 87–90 (GYPR), and Gln94. The interval 129 to 135 (GRARGAD) is LID. Residue Arg130 coordinates ATP. AMP contacts are provided by Arg132 and Arg144. Arg172 provides a ligand contact to ATP.

It belongs to the adenylate kinase family. As to quaternary structure, monomer.

The protein localises to the cytoplasm. It carries out the reaction AMP + ATP = 2 ADP. It functions in the pathway purine metabolism; AMP biosynthesis via salvage pathway; AMP from ADP: step 1/1. In terms of biological role, catalyzes the reversible transfer of the terminal phosphate group between ATP and AMP. Plays an important role in cellular energy homeostasis and in adenine nucleotide metabolism. The polypeptide is Adenylate kinase (Campylobacter concisus (strain 13826)).